A 429-amino-acid chain; its full sequence is Putative F-box/kelch-repeat protein At2g21680 (429 aa).

The disordered stretch occupies residues Met-1–Leu-32. The span at His-17–Asn-29 shows a compositional bias: basic and acidic residues. Residues Gln-37 to Gly-84 enclose the F-box domain. Kelch repeat units follow at residues Asp-144–Glu-175, Thr-176–Gly-221, Lys-222–Ala-267, Met-269–Asn-313, and Leu-315–Lys-359.

The protein is Putative F-box/kelch-repeat protein At2g21680 of Arabidopsis thaliana (Mouse-ear cress).